The sequence spans 90 residues: Major envelope protein (90 aa).

Residues 53–70 (AVSVVSWAVAAGLIGELI) traverse the membrane as a helical segment.

The protein localises to the virion membrane. Functionally, essential for membrane formation. This is Major envelope protein (P9) from Pseudomonas savastanoi pv. phaseolicola (Pseudomonas syringae pv. phaseolicola).